The chain runs to 501 residues: Serine/threonine protein phosphatase 2A 55 kDa regulatory subunit B beta isoform (501 aa).

Methionine 1 is modified (N-acetylmethionine). WD repeat units lie at residues 34-73, 110-151, 220-258, 269-309, and 328-366; these read QEVDIISAIEFDKSGDHLATGDRGGRVVLFERTDTKDHGG, EIEE…IKKI, AHDYHINSISNSSDGETFISADDLRVNLWNLEISNQSFN, DLTE…LCDS, and EIIASISDIKFSKDGRYILSRDYMTLKLWDINMDSGPVA. Positions 439–449 are enriched in polar residues; sequence TPARPSRSIGS. Residues 439 to 466 are disordered; that stretch reads TPARPSRSIGSMTRVVRRGSESPGTEAN. A WD 6 repeat occupies 471 to 501; sequence DFTTKLLHMAWHPTENSIACAAANSLYMYYA.

The protein belongs to the phosphatase 2A regulatory subunit B family. PP2A consists of a common heteromeric enzyme, composed of a catalytic subunit (subunits C), a constant regulatory subunit (subunit A), and a variety of regulatory subunits such as subunits B (the R2/B/PR55/B55, R3/B''/PR72/PR130/PR59 and R5/B'/B56 families). Interacts with SIC/RON3. In terms of tissue distribution, expressed ubiquitously.

In terms of biological role, the B regulatory subunit may modulate substrate selectivity and catalytic activity, and may also direct the localization of the catalytic enzyme to a particular subcellular compartment. The polypeptide is Serine/threonine protein phosphatase 2A 55 kDa regulatory subunit B beta isoform (PP2AB2) (Arabidopsis thaliana (Mouse-ear cress)).